The following is a 122-amino-acid chain: MIQQETRLHVADNTGAKELLAIRVLGGSKRRYAGIGDVIVASVKDAIPGGSVKKGDVVKAVVVRTVKERRRADGSYIKFDENAAVILGSGREPKGTRIFGPVGRELRDKRFMRIVSLAPEVI.

It belongs to the universal ribosomal protein uL14 family. Part of the 50S ribosomal subunit. Forms a cluster with proteins L3 and L19. In the 70S ribosome, L14 and L19 interact and together make contacts with the 16S rRNA in bridges B5 and B8.

Binds to 23S rRNA. Forms part of two intersubunit bridges in the 70S ribosome. This is Large ribosomal subunit protein uL14 from Bifidobacterium animalis subsp. lactis (strain AD011).